We begin with the raw amino-acid sequence, 542 residues long: CTP synthase (542 aa).

Positions 1–265 (MTKYIFVTGG…LKPISKELSL (265 aa)) are amidoligase domain. Residue serine 13 coordinates CTP. Position 13 (serine 13) interacts with UTP. Residues 14 to 19 (SLGKGI) and aspartate 71 each bind ATP. The Mg(2+) site is built by aspartate 71 and glutamate 139. Residues 146–148 (DIE), 186–191 (KSKPTQ), and lysine 222 contribute to the CTP site. UTP-binding positions include 186 to 191 (KSKPTQ) and lysine 222. Residues 290–541 (VLGFVGKYLE…VEATLAISQE (252 aa)) enclose the Glutamine amidotransferase type-1 domain. Position 352 (glycine 352) interacts with L-glutamine. Cysteine 379 acts as the Nucleophile; for glutamine hydrolysis in catalysis. L-glutamine is bound by residues 380–383 (LGMQ), glutamate 403, and arginine 471. Residues histidine 514 and glutamate 516 contribute to the active site.

This sequence belongs to the CTP synthase family. In terms of assembly, homotetramer.

The catalysed reaction is UTP + L-glutamine + ATP + H2O = CTP + L-glutamate + ADP + phosphate + 2 H(+). It carries out the reaction L-glutamine + H2O = L-glutamate + NH4(+). The enzyme catalyses UTP + NH4(+) + ATP = CTP + ADP + phosphate + 2 H(+). The protein operates within pyrimidine metabolism; CTP biosynthesis via de novo pathway; CTP from UDP: step 2/2. With respect to regulation, allosterically activated by GTP, when glutamine is the substrate; GTP has no effect on the reaction when ammonia is the substrate. The allosteric effector GTP functions by stabilizing the protein conformation that binds the tetrahedral intermediate(s) formed during glutamine hydrolysis. Inhibited by the product CTP, via allosteric rather than competitive inhibition. Catalyzes the ATP-dependent amination of UTP to CTP with either L-glutamine or ammonia as the source of nitrogen. Regulates intracellular CTP levels through interactions with the four ribonucleotide triphosphates. In Sulfurimonas denitrificans (strain ATCC 33889 / DSM 1251) (Thiomicrospira denitrificans (strain ATCC 33889 / DSM 1251)), this protein is CTP synthase.